The sequence spans 104 residues: Large ribosomal subunit protein uL24 (104 aa).

The protein belongs to the universal ribosomal protein uL24 family. In terms of assembly, part of the 50S ribosomal subunit.

Its function is as follows. One of two assembly initiator proteins, it binds directly to the 5'-end of the 23S rRNA, where it nucleates assembly of the 50S subunit. One of the proteins that surrounds the polypeptide exit tunnel on the outside of the subunit. The chain is Large ribosomal subunit protein uL24 from Buchnera aphidicola subsp. Schizaphis graminum (strain Sg).